The sequence spans 313 residues: Probable pyridoxal 5'-phosphate synthase subunit PDX1.2 (313 aa).

A D-ribose 5-phosphate-binding site is contributed by aspartate 42. The Schiff-base intermediate with D-ribose 5-phosphate role is filled by lysine 99. Residue glycine 171 coordinates D-ribose 5-phosphate. Arginine 183 provides a ligand contact to D-glyceraldehyde 3-phosphate. D-ribose 5-phosphate contacts are provided by residues glycine 232 and 253–254 (GS).

Belongs to the PdxS/SNZ family.

It carries out the reaction aldehydo-D-ribose 5-phosphate + D-glyceraldehyde 3-phosphate + L-glutamine = pyridoxal 5'-phosphate + L-glutamate + phosphate + 3 H2O + H(+). It participates in cofactor biosynthesis; pyridoxal 5'-phosphate biosynthesis. Catalyzes the formation of pyridoxal 5'-phosphate from ribose 5-phosphate (RBP), glyceraldehyde 3-phosphate (G3P) and ammonia. The ammonia is provided by PDX2. Can also use ribulose 5-phosphate and dihydroxyacetone phosphate as substrates, resulting from enzyme-catalyzed isomerization of RBP and G3P, respectively. Also plays an indirect role in resistance to singlet oxygen-generating photosensitizers. This chain is Probable pyridoxal 5'-phosphate synthase subunit PDX1.2 (PDX12), found in Oryza sativa subsp. japonica (Rice).